The chain runs to 787 residues: Signal transducer and activator of transcription 5B (787 aa).

Tyr90 carries the phosphotyrosine modification. Residue Ser128 is modified to Phosphoserine. The SH2 domain maps to Trp589 to Val686. Tyr682 carries the phosphotyrosine modification. Position 699 is a phosphotyrosine; by HCK, JAK and PTK6 (Tyr699).

The protein belongs to the transcription factor STAT family. As to quaternary structure, upon activation, forms a homodimer or a heterodimer with a related family member. Binds NR3C1. Interacts with NCOA1. Interacts with NMI. Interacts with SOCS7. Interacts (via SH2 domain) with INSR. Interacts with CPEB3; this inhibits STAT5B-mediated transcriptional activation. In terms of processing, tyrosine phosphorylated in response to signaling via activated KIT, resulting in translocation to the nucleus. Tyrosine phosphorylated in response to signaling via activated FLT3; wild-type FLT3 results in much weaker phosphorylation than constitutively activated mutant FLT3. Alternatively, can be phosphorylated by JAK2. Phosphorylation at Tyr-699 by PTK6 or HCK leads to an increase of its transcriptional activity.

Its subcellular location is the cytoplasm. The protein localises to the nucleus. Functionally, carries out a dual function: signal transduction and activation of transcription. Mediates cellular responses to the cytokine KITLG/SCF and other growth factors. Binds to the GAS element and activates PRL-induced transcription. Positively regulates hematopoietic/erythroid differentiation. The sequence is that of Signal transducer and activator of transcription 5B (STAT5B) from Bos taurus (Bovine).